Here is a 121-residue protein sequence, read N- to C-terminus: Cytochrome c2 iso-2 (121 aa).

Heme c-binding residues include Cys15, Cys18, His19, and Met98.

The protein belongs to the cytochrome c family. Post-translationally, binds 1 heme c group covalently per subunit.

Cytochrome c2 is found mainly in purple, non-sulfur, photosynthetic bacteria where it functions as the electron donor to the oxidized bacteriochlorophyll in the photophosphorylation pathway. However, it may also have a role in the respiratory chain and is found in some non-photosynthetic bacteria. The sequence is that of Cytochrome c2 iso-2 from Rhodospirillum centenum (Rhodocista centenaria).